A 203-amino-acid polypeptide reads, in one-letter code: Transcriptional regulator GfcR (203 aa).

Belongs to the purine/pyrimidine phosphoribosyltransferase family. GfcR subfamily.

In Methanothrix thermoacetophila (strain DSM 6194 / JCM 14653 / NBRC 101360 / PT) (Methanosaeta thermophila), this protein is Transcriptional regulator GfcR.